We begin with the raw amino-acid sequence, 74 residues long: Anaphase-promoting complex subunit 13 (74 aa).

Belongs to the APC13 family. As to quaternary structure, the APC/C is composed of at least 12 subunits.

It localises to the nucleus. It participates in protein modification; protein ubiquitination. Component of the anaphase promoting complex/cyclosome (APC/C), a cell cycle-regulated E3 ubiquitin ligase that controls progression through mitosis and the G1 phase of the cell cycle. The APC/C complex acts by mediating ubiquitination and subsequent degradation of target proteins: it mainly mediates the formation of 'Lys-11'-linked polyubiquitin chains and, to a lower extent, the formation of 'Lys-48'- and 'Lys-63'-linked polyubiquitin chains. The APC/C complex catalyzes assembly of branched 'Lys-11'-/'Lys-48'-linked branched ubiquitin chains on target proteins. This Xenopus tropicalis (Western clawed frog) protein is Anaphase-promoting complex subunit 13 (anapc13).